Reading from the N-terminus, the 566-residue chain is Putative ABC transporter ATP-binding protein BCE_2668 (566 aa).

ABC transporter domains lie at 5-246 (ISFE…GLRE) and 300-533 (LKVE…ANLK). Residues 39 to 46 (GRSGSGKS) and 333 to 340 (GHNGAGKS) contribute to the ATP site.

The protein belongs to the ABC transporter superfamily.

It localises to the cell membrane. In terms of biological role, probably part of an ABC transporter complex. Responsible for energy coupling to the transport system. This Bacillus cereus (strain ATCC 10987 / NRS 248) protein is Putative ABC transporter ATP-binding protein BCE_2668.